The following is a 162-amino-acid chain: Circumsporozoite protein-related antigen (162 aa).

The first 16 residues, 1-16 (MKILSVFFLALFFIIF), serve as a signal peptide directing secretion. Disordered stretches follow at residues 24 to 44 (KTNK…KGSG) and 109 to 162 (PFKI…GPEH). Over residues 114–130 (SSDPADNANPDADSESN) the composition is skewed to low complexity. Residues 137 to 162 (PQVTAQDVTPEQPQGDDNNLVSGPEH) show a composition bias toward polar residues.

This chain is Circumsporozoite protein-related antigen, found in Plasmodium falciparum.